A 237-amino-acid chain; its full sequence is D-aminoacyl-tRNA deacylase (237 aa).

It belongs to the DtdA deacylase family. In terms of assembly, monomer. Zn(2+) is required as a cofactor.

The enzyme catalyses a D-aminoacyl-tRNA + H2O = a tRNA + a D-alpha-amino acid + H(+). The catalysed reaction is glycyl-tRNA(Ala) + H2O = tRNA(Ala) + glycine + H(+). Functionally, D-aminoacyl-tRNA deacylase with broad substrate specificity. By recycling D-aminoacyl-tRNA to D-amino acids and free tRNA molecules, this enzyme counteracts the toxicity associated with the formation of D-aminoacyl-tRNA entities in vivo. The sequence is that of D-aminoacyl-tRNA deacylase from Saccharolobus islandicus (strain Y.N.15.51 / Yellowstone #2) (Sulfolobus islandicus).